A 190-amino-acid chain; its full sequence is Xanthine phosphoribosyltransferase (190 aa).

Positions 20 and 27 each coordinate xanthine. A 5-phospho-alpha-D-ribose 1-diphosphate-binding site is contributed by 129–133 (ANGAA). A xanthine-binding site is contributed by Lys-157.

This sequence belongs to the purine/pyrimidine phosphoribosyltransferase family. Xpt subfamily. Homodimer.

It localises to the cytoplasm. The enzyme catalyses XMP + diphosphate = xanthine + 5-phospho-alpha-D-ribose 1-diphosphate. It functions in the pathway purine metabolism; XMP biosynthesis via salvage pathway; XMP from xanthine: step 1/1. Its function is as follows. Converts the preformed base xanthine, a product of nucleic acid breakdown, to xanthosine 5'-monophosphate (XMP), so it can be reused for RNA or DNA synthesis. The chain is Xanthine phosphoribosyltransferase from Laribacter hongkongensis (strain HLHK9).